Consider the following 255-residue polypeptide: High-affinity branched-chain amino acid transport ATP-binding protein LivG (255 aa).

Residues 6–254 (LAVNGLMMRF…PDVIRAYLGE (249 aa)) form the ABC transporter domain. Residue 38-45 (GPNGAGKT) participates in ATP binding.

It belongs to the ABC transporter superfamily.

Component of the high-affinity branched-chain amino acid transport system. In Salmonella typhi, this protein is High-affinity branched-chain amino acid transport ATP-binding protein LivG (livG).